The sequence spans 608 residues: Mitochondrial import receptor subunit TOM70 (608 aa).

Ala2 bears the N-acetylalanine mark. The Mitochondrial intermembrane segment spans residues 2–38 (AASKPVEAAVVAAAVPSSGSGVGGGGTAGPGTGGLPR). The chain crosses the membrane as a helical span at residues 39-59 (WQLALAVGAPLLLGAGAIYLW). At 60-608 (SRQQRRREAR…KKYGLKPPTL (549 aa)) the chain is on the cytoplasmic side. The interval 67 to 107 (EARGRGDASGLKRNSERKTPEGRASPAPGSGHPEGPGAHLD) is disordered. Arg71 is modified (omega-N-methylarginine). Residues Ser91, Ser96, and Ser110 each carry the phosphoserine modification. TPR repeat units follow at residues 114-147 (AQAAKNKGNKYFKAGKYEQAIQCYTEAISLCPTE) and 153-186 (STFYQNRAAAFEQLQKWKEVAQDCTKAVELNPKY). At Lys185 the chain carries N6-acetyllysine. A Glycyl lysine isopeptide (Lys-Gly) (interchain with G-Cter in SUMO2) cross-link involves residue Lys275. 8 TPR repeats span residues 294–327 (ENSGYLKAKQYMEEENYDKIISECSKEIDAEGKY), 329–362 (AEALLLRATFYLLIGNANAAKPDLDKVISLKEAN), 367–400 (ANALIKRGSMYMQQQQPLLSTQDFNMAADIDPQN), 401–434 (ADVYHHRGQLKILLDQVEEAVADFDECIRLRPES), 440–475 (QKCFALYRQAYTGNNSSQIQAAMKGFEEVIKKFPRC), 476–509 (AEGYALYAQALTDQQQFGKADEMYDKCIDLEPDN), 511–544 (TTYVHKGLLQLQWKQDLDRGLELISKAIEIDNKC), and 545–578 (DFAYETMGTIEVQRGNMEKAIDMFNKAINLAKSE). A Phosphoserine modification is found at Ser434.

The protein belongs to the Tom70 family. In terms of assembly, forms part of the preprotein translocase complex of the outer mitochondrial membrane (TOM complex) which consists of at least 7 different proteins (TOMM5, TOMM6, TOMM7, TOMM20, TOMM22, TOMM40 and TOMM70). Interacts with CAPN8. Interacts with TRADD, TRAF6 and STING. Interacts with MAVS; the interaction is enhanced by Sendai virus infection. Interacts with HSPA8 and HSP90AA1; both interactions are required for preprotein mitochondrial import. The interaction with HSP90AA1 is direct and mediates the association of TOMM70 with IRF3 and TBK1. Upon mitochondrial depolarization, interacts with PINK1; the interaction is required for PINK1-TOM-TIM23 supercomplex formation which is critical for PINK1 stabilization at the outer mitochondrial membrane, kinase activation and downstream mitophagy. (Microbial infection) Interacts (via C-terminus) with SARS coronaviru/SARS-CoV and SARS coronavirus-2/SARS-CoV-2 virus protein ORF9b. As to quaternary structure, (Microbial infection) Interacts with parasite T.gondii RH strain MAF1b1; the interaction impairs TOMM70 import activity, enables the parasite to associate with the host mitochondria and facilitates the association of MAF1b1 with MIB complex component SAMM50, promoting the formation of SPOTs (structures positive for outer mitochondrial membrane (OMM)); the interaction is probably indirect.

The protein localises to the mitochondrion outer membrane. Functionally, acts as a receptor of the preprotein translocase complex of the outer mitochondrial membrane (TOM complex). Recognizes and mediates the translocation of mitochondrial preproteins from the cytosol into the mitochondria in a chaperone dependent manner. Mediates TBK1 and IRF3 activation induced by MAVS in response to Sendai virus infection and promotes host antiviral responses during virus infection. Upon Sendai virus infection, recruits HSP90AA1:IRF3:BAX in mitochondrion and the complex induces apoptosis. In Homo sapiens (Human), this protein is Mitochondrial import receptor subunit TOM70.